A 710-amino-acid polypeptide reads, in one-letter code: Nucleolin (710 aa).

The segment at 1–303 (MVKLAKAGKN…KKQKVEGTEP (303 aa)) is disordered. Lys-9, Lys-15, and Lys-16 each carry N6-acetyllysine. Acidic residues predominate over residues 24-43 (VEEDSEDEEMSEDEEDDSSG). A phosphoserine mark is found at Ser-28, Ser-34, Ser-41, and Ser-42. The segment covering 56–107 (AAATSAKKVVVSPTKKVAVATPAKKAAVTPGKKAAATPAKKTVTPAKAVTTP) has biased composition (low complexity). Residues 58 to 65 (ATSAKKVV) form repeat 1. The 8 X 8 AA tandem repeats of X-T-P-X-K-K-X-X stretch occupies residues 58–135 (ATSAKKVVVS…GAAIPAKGAK (78 aa)). A Phosphoserine modification is found at Ser-67. Residues Thr-69, Thr-76, Thr-84, and Thr-92 each carry the phosphothreonine modification. 3 repeat units span residues 75 to 82 (ATPAKKAA), 83 to 90 (VTPGKKAA), and 91 to 98 (ATPAKKTV). Lys-96 bears the N6-acetyllysine mark. Position 99 is a phosphothreonine (Thr-99). Residues 99–104 (TPAKAV) form a 5; truncated repeat. Residue Lys-102 is modified to N6-acetyllysine. Repeat 6 spans residues 105–112 (TTPGKKGA). Phosphothreonine is present on Thr-106. An N6-acetyllysine modification is found at Lys-109. Position 113 is a phosphothreonine (Thr-113). Lys-116 carries the post-translational modification N6-acetyllysine. Tandem repeats lie at residues 120-127 (ATPGKKGA) and 128-135 (AIPAKGAK). Thr-121 carries the post-translational modification Phosphothreonine. The segment covering 122–137 (PGKKGAAIPAKGAKNG) has biased composition (low complexity). Position 124 is an N6-acetyllysine (Lys-124). Phosphoserine occurs at positions 145 and 153. Over residues 145 to 171 (SDEEEDDDSEEDEEDDEDEDEDEDEIE) the composition is skewed to acidic residues. Residues 172-183 (PAAMKAAAAAPA) show a composition bias toward low complexity. Ser-184 and Ser-206 each carry phosphoserine. Over residues 184–211 (SEDEDDEDDEDDEDDDDDEEDDSEEEAM) the composition is skewed to acidic residues. Residue Thr-214 is modified to Phosphothreonine. Residues 234 to 272 (EDEDEEEDDEDEDDDDDEDDEDDDDEDDEEEEEEEEEEP) are compositionally biased toward acidic residues. Over residues 273–300 (VKEAPGKRKKEMAKQKAAPEAKKQKVEG) the composition is skewed to basic and acidic residues. Lys-297 is covalently cross-linked (Glycyl lysine isopeptide (Lys-Gly) (interchain with G-Cter in SUMO1); alternate). Lys-297 participates in a covalent cross-link: Glycyl lysine isopeptide (Lys-Gly) (interchain with G-Cter in SUMO2); alternate. Thr-301 carries the post-translational modification Phosphothreonine. RRM domains follow at residues 307–383 (FNLF…KPKG) and 393–466 (RTLL…YTGE). Position 318 is an N6-acetyllysine (Lys-318). Lys-324 participates in a covalent cross-link: Glycyl lysine isopeptide (Lys-Gly) (interchain with G-Cter in SUMO1); alternate. Residue Lys-324 forms a Glycyl lysine isopeptide (Lys-Gly) (interchain with G-Cter in SUMO2); alternate linkage. Lys-348 carries the N6-acetyllysine modification. At Ser-356 the chain carries Phosphoserine. Thr-367 carries the phosphothreonine modification. Lys-370 is covalently cross-linked (Glycyl lysine isopeptide (Lys-Gly) (interchain with G-Cter in SUMO2)). Lys-377 is covalently cross-linked (Glycyl lysine isopeptide (Lys-Gly) (interchain with G-Cter in SUMO2); alternate). An N6-acetyllysine; alternate modification is found at Lys-377. N6-acetyllysine is present on residues Lys-398 and Lys-403. Thr-405 bears the Phosphothreonine mark. Lys-427 and Lys-444 each carry N6-acetyllysine. Phosphoserine is present on residues Ser-458 and Ser-460. Lys-467 and Lys-477 each carry N6-acetyllysine. In terms of domain architecture, RRM 3 spans 486–560 (KTLVLSNLSY…RAIRLELQGP (75 aa)). A Glycyl lysine isopeptide (Lys-Gly) (interchain with G-Cter in SUMO2); alternate cross-link involves residue Lys-513. An N6-acetyllysine; alternate modification is found at Lys-513. Lys-521 is modified (N6-acetyllysine). Position 563 is a phosphoserine (Ser-563). Lys-572 is subject to N6-acetyllysine. Positions 572-647 (KTLFVKGLSE…NKVTLDWAKP (76 aa)) constitute an RRM 4 domain. Lys-577 participates in a covalent cross-link: Glycyl lysine isopeptide (Lys-Gly) (interchain with G-Cter in SUMO2); alternate. The residue at position 577 (Lys-577) is an N6-acetyllysine; alternate. Ser-580 is modified (phosphoserine). A Glycyl lysine isopeptide (Lys-Gly) (interchain with G-Cter in SUMO1); alternate cross-link involves residue Lys-589. Lys-589 participates in a covalent cross-link: Glycyl lysine isopeptide (Lys-Gly) (interchain with G-Cter in SUMO2); alternate. Phosphoserine occurs at positions 591 and 619. Lys-624 is covalently cross-linked (Glycyl lysine isopeptide (Lys-Gly) (interchain with G-Cter in SUMO2)). A disordered region spans residues 640–710 (VTLDWAKPKG…KPQGKKTKFE (71 aa)). Lys-646 is subject to N6-acetyllysine. Over residues 650–696 (EGGFGGRGGGRGGFGGRGGGRGGRGGFGGRGRGGFGGRGGFRGGRGG) the composition is skewed to gly residues. Arg-656, Arg-660, Arg-666, Arg-670, Arg-673, Arg-679, Arg-681, Arg-687, and Arg-691 each carry asymmetric dimethylarginine. Arg-694 carries the post-translational modification Asymmetric dimethylarginine; alternate. Arg-694 carries the post-translational modification Omega-N-methylarginine; alternate. Residues 697 to 710 (GGDHKPQGKKTKFE) are compositionally biased toward basic and acidic residues.

Identified in a IGF2BP1-dependent mRNP granule complex containing untranslated mRNAs. Component of the SWAP complex that consists of NPM1, NCL/nucleolin, PARP1 and SWAP70. Component of a complex which is at least composed of HTATSF1/Tat-SF1, the P-TEFb complex components CDK9 and CCNT1, RNA polymerase II, SUPT5H, and NCL/nucleolin. Interacts with AICDA. Interacts with APTX. Interacts with C1QBP. Interacts with ERBB4. Interacts (via C-terminus) with FMR1 isoform 6 (via N-terminus). Interacts with GZF1; this interaction is important for nucleolar localization of GZF1. Interacts with NSUN2. Interacts with NVL. Interacts (via N-terminus domain) with SETX. Interacts (via RRM1 and C-terminal RRM4/Arg/Gly-rich domains) with TERT; the interaction is important for nucleolar localization of TERT. Interacts with WDR46. Interacts with ZFP36. Interacts with LRRC34. Interacts with RRP1B. Interacts with HNRNPU; this interaction occurs during mitosis. Interacts with RIOK1; RIOK1 recruits NCL to PRMT5 for symmetrically methylation. Interacts with ZBTB7B. Interacts with MDK; this interaction promotes NCL clustering and lateral movements of this complex into lipid rafts leading to MDK internalization. Interacts with HDGF (isoform 1). Interacts with ALKBH2. Interacts with IGFBP5; this interaction is necessary for IGFBP5 localization to the nucleus. Interacts with DDX24 (when ubiquitinated); this interaction may be important during ribosome biogenesis. Some glutamate residues are glycylated by TTLL8. This modification occurs exclusively on glutamate residues and results in a glycine chain on the gamma-carboxyl group. Post-translationally, symmetrically methylated by PRMT5.

Its subcellular location is the nucleus. It is found in the nucleolus. The protein localises to the cytoplasm. Nucleolin is the major nucleolar protein of growing eukaryotic cells. It is found associated with intranucleolar chromatin and pre-ribosomal particles. It induces chromatin decondensation by binding to histone H1. It is thought to play a role in pre-rRNA transcription and ribosome assembly. May play a role in the process of transcriptional elongation. Binds RNA oligonucleotides with 5'-UUAGGG-3' repeats more tightly than the telomeric single-stranded DNA 5'-TTAGGG-3' repeats. The sequence is that of Nucleolin (NCL) from Homo sapiens (Human).